The chain runs to 89 residues: Ubiquinol-cytochrome-c reductase complex assembly factor 3 (89 aa).

The Mitochondrial matrix segment spans residues 1 to 7 (MEVARKA). The helical transmembrane segment at 8–28 (LVAVAVLGGGAGVGSILFALV) threads the bilayer. Positions 23-80 (ILFALVTPGELQKQSMLQEMPERDSRRRDEAVRTTELVMATLKDAAATKENVAWRRNW) are mediates lipid-binding. At 29-89 (TPGELQKQSM…WTVSGDGRSA (61 aa)) the chain is on the mitochondrial intermembrane side.

Belongs to the UQCC3 family. Associates with the ubiquinol-cytochrome c reductase complex (mitochondrial respiratory chain complex III(CIII) or cytochrome b-c1 complex). Interacts with UQCC1. Forms a complex, named COMC, composed of UQCC1, UQCC2; UQCC3 and UQCC4; mediates MT-CYB hemylation and association with the first nuclear-encoded complex III subunit UQCRQ. In terms of processing, probably cleaved by OMA1 under mitochondrial stress conditions.

It is found in the mitochondrion inner membrane. Functionally, required for the assembly of the ubiquinol-cytochrome c reductase complex (mitochondrial respiratory chain complex III or cytochrome b-c1 complex), mediating cytochrome b recruitment and probably stabilization within the complex. Thereby, plays an important role in ATP production by mitochondria. Cardiolipin-binding protein, it may also control the cardiolipin composition of mitochondria membranes and their morphology. The polypeptide is Ubiquinol-cytochrome-c reductase complex assembly factor 3 (Mus musculus (Mouse)).